We begin with the raw amino-acid sequence, 246 residues long: Putative outer membrane protein YiaT (246 aa).

A signal peptide spans M1–A21.

The protein belongs to the MipA/OmpV family.

It localises to the cell outer membrane. This is Putative outer membrane protein YiaT (yiaT) from Escherichia coli O157:H7.